The primary structure comprises 401 residues: Acetate kinase (401 aa).

Asparagine 9 contributes to the Mg(2+) binding site. An ATP-binding site is contributed by lysine 16. Residue arginine 88 coordinates substrate. The active-site Proton donor/acceptor is aspartate 147. ATP contacts are provided by residues 207–211 (HLGNG), 282–284 (DCR), and 333–337 (GIGEN). Glutamate 388 lines the Mg(2+) pocket.

Belongs to the acetokinase family. In terms of assembly, homodimer. Mg(2+) is required as a cofactor. The cofactor is Mn(2+).

It localises to the cytoplasm. The catalysed reaction is acetate + ATP = acetyl phosphate + ADP. Its pathway is metabolic intermediate biosynthesis; acetyl-CoA biosynthesis; acetyl-CoA from acetate: step 1/2. In terms of biological role, catalyzes the formation of acetyl phosphate from acetate and ATP. Can also catalyze the reverse reaction. The polypeptide is Acetate kinase (Haemophilus influenzae (strain ATCC 51907 / DSM 11121 / KW20 / Rd)).